Reading from the N-terminus, the 99-residue chain is Acylphosphatase-2 (99 aa).

Residue Ser2 is modified to N-acetylserine. The Acylphosphatase-like domain occupies 9–99; sequence SVDYEVFGRV…LEYSNFSIRY (91 aa). Active-site residues include Arg24 and Asn42. Ser93 bears the Phosphoserine mark.

It belongs to the acylphosphatase family.

It catalyses the reaction an acyl phosphate + H2O = a carboxylate + phosphate + H(+). Functionally, its physiological role is not yet clear. This is Acylphosphatase-2 (ACYP2) from Homo sapiens (Human).